The primary structure comprises 316 residues: Probable cell division protein WhiA (316 aa).

Positions 275-309 form a DNA-binding region, H-T-H motif; that stretch reads TLKELGEMVSGGKISKSGINHRLRKIDEIAEKLRA.

The protein belongs to the WhiA family.

Its function is as follows. Involved in cell division and chromosome segregation. This is Probable cell division protein WhiA from Bacillus cytotoxicus (strain DSM 22905 / CIP 110041 / 391-98 / NVH 391-98).